The sequence spans 62 residues: Small ribosomal subunit protein eS27 (62 aa).

Positions 17, 20, 36, and 39 each coordinate Zn(2+). The segment at 17 to 39 (CPECNNEQIVFGSPATVVKCLTC) adopts a C4-type zinc-finger fold.

Belongs to the eukaryotic ribosomal protein eS27 family. In terms of assembly, part of the 30S ribosomal subunit. Zn(2+) is required as a cofactor.

The polypeptide is Small ribosomal subunit protein eS27 (Methanocaldococcus jannaschii (strain ATCC 43067 / DSM 2661 / JAL-1 / JCM 10045 / NBRC 100440) (Methanococcus jannaschii)).